The sequence spans 239 residues: Ribonuclease PH (239 aa).

Residues Arg87 and 125–127 each bind phosphate; that span reads GTR.

The protein belongs to the RNase PH family. Homohexameric ring arranged as a trimer of dimers.

The catalysed reaction is tRNA(n+1) + phosphate = tRNA(n) + a ribonucleoside 5'-diphosphate. Functionally, phosphorolytic 3'-5' exoribonuclease that plays an important role in tRNA 3'-end maturation. Removes nucleotide residues following the 3'-CCA terminus of tRNAs; can also add nucleotides to the ends of RNA molecules by using nucleoside diphosphates as substrates, but this may not be physiologically important. Probably plays a role in initiation of 16S rRNA degradation (leading to ribosome degradation) during starvation. This Dehalococcoides mccartyi (strain ATCC BAA-2266 / KCTC 15142 / 195) (Dehalococcoides ethenogenes (strain 195)) protein is Ribonuclease PH.